Consider the following 185-residue polypeptide: Heavy metal-associated isoprenylated plant protein 11 (185 aa).

The HMA domain maps to 39-106 (QQNTNVVFKL…ICKHVAIIAA (68 aa)). Over residues 109–158 (IREPEQNRNPVTRREPNREPEQNRSRVTRREPSREPEPNRAPLARRESRP) the composition is skewed to basic and acidic residues. The interval 109–185 (IREPEQNRNP…GENSDGCIIM (77 aa)) is disordered. The residue at position 182 (cysteine 182) is a Cysteine methyl ester. Residue cysteine 182 is the site of S-farnesyl cysteine attachment. The propeptide at 183 to 185 (IIM) is removed in mature form.

Belongs to the HIPP family.

Probable heavy-metal-binding protein. The polypeptide is Heavy metal-associated isoprenylated plant protein 11 (Arabidopsis thaliana (Mouse-ear cress)).